The following is a 324-amino-acid chain: MMTSMEGMVEKGVLDDIIRRLLEGKGGKQVQLSESEIRQLCFNARQIFLSQPNLLDLHAPIRICGDIHGQYQDLLRLFEYGGYPPSANYLFLGDYVDRGKQSLETICLLLAYKIRYPSKIYLLRGNHEDAKINRIYGFYDECKRRFNVRLWKVFTDCFNCLPVAALIDEKILCMHGGLSPDLDNLNQIREIQRPIEIPDSGLLCDLLWSDPDQKIEGWADSDRGISCTFGADKVAEFLDKNDLDLICRGHQVVEDGYEFFAKRRLVTIFSAPNYGGEFDNAGALLSVDESLVCSFEIMKPAPASSSHPLKKDFHNRTLGYNLSA.

Positions 66, 68, 94, and 126 each coordinate Mn(2+). H127 (proton donor) is an active-site residue. Positions 175 and 250 each coordinate Mn(2+).

Belongs to the PPP phosphatase family. PP-1 subfamily. Mn(2+) is required as a cofactor. As to expression, expressed in roots, rosettes and flowers.

Its subcellular location is the nucleus. The protein localises to the cytoplasm. It catalyses the reaction O-phospho-L-seryl-[protein] + H2O = L-seryl-[protein] + phosphate. The catalysed reaction is O-phospho-L-threonyl-[protein] + H2O = L-threonyl-[protein] + phosphate. With respect to regulation, phosphatase activity is strongly reduced by the protein phosphatase inhibitor 2 (I-2). In terms of biological role, serine/threonine-protein phosphatase that possesses phosphatase activity toward para-nitrophenyl phosphate (pNPP) in vitro. This Arabidopsis thaliana (Mouse-ear cress) protein is Serine/threonine-protein phosphatase PP1 isozyme 8.